The following is a 278-amino-acid chain: Tryptophan synthase alpha chain (278 aa).

Active-site proton acceptor residues include Glu50 and Asp61.

The protein belongs to the TrpA family. As to quaternary structure, tetramer of two alpha and two beta chains.

The enzyme catalyses (1S,2R)-1-C-(indol-3-yl)glycerol 3-phosphate + L-serine = D-glyceraldehyde 3-phosphate + L-tryptophan + H2O. It participates in amino-acid biosynthesis; L-tryptophan biosynthesis; L-tryptophan from chorismate: step 5/5. Its function is as follows. The alpha subunit is responsible for the aldol cleavage of indoleglycerol phosphate to indole and glyceraldehyde 3-phosphate. The polypeptide is Tryptophan synthase alpha chain (Afipia carboxidovorans (strain ATCC 49405 / DSM 1227 / KCTC 32145 / OM5) (Oligotropha carboxidovorans)).